We begin with the raw amino-acid sequence, 586 residues long: Nucleus accumbens-associated protein 2 (586 aa).

The 65-residue stretch at 30 to 94 (CDVSIVVKGQ…CYTGKLTMAA (65 aa)) folds into the BTB domain. K171 participates in a covalent cross-link: Glycyl lysine isopeptide (Lys-Gly) (interchain with G-Cter in SUMO2). The segment at 177–196 (MPPASGPGLASKRPLETGPR) is disordered. Residue K215 forms a Glycyl lysine isopeptide (Lys-Gly) (interchain with G-Cter in SUMO2) linkage. A disordered region spans residues 236–272 (QVPYPPGERTSPGASSLPTTDSPTSYHNEEDEEDDEA). Over residues 247–261 (PGASSLPTTDSPTSY) the composition is skewed to polar residues. Glycyl lysine isopeptide (Lys-Gly) (interchain with G-Cter in SUMO2) cross-links involve residues K297, K427, and K454. In terms of domain architecture, BEN spans 349-446 (GSGVYITRGQ…DMCTNARRVR (98 aa)). The segment at 542–586 (APEQLPADGQSSPQAFEQGNTSSSRPQTPVATATRRPEGTYAGTL) is disordered. Positions 550–572 (GQSSPQAFEQGNTSSSRPQTPVA) are enriched in polar residues.

In terms of assembly, homooligomer; mediated by the BTB domain. Interacts with the NuRD complex. Interacts (via C-terminal part) with HDAC2. Interacts (via BTB domain) with MTA1, MTA2 and MTA3.

Its subcellular location is the nucleus. Functionally, functions as a transcriptional repressor through its association with the NuRD complex. Recruits the NuRD complex to the promoter of MDM2, leading to the repression of MDM2 transcription and subsequent stability of p53/TP53. This is Nucleus accumbens-associated protein 2 (Nacc2) from Mus musculus (Mouse).